The primary structure comprises 365 residues: Protein-glutamate methylesterase/protein-glutamine glutaminase 1 (365 aa).

The region spanning 4–121 (KVLVVDDSQF…SRDSVVLKKR (118 aa)) is the Response regulatory domain. D55 bears the 4-aspartylphosphate mark. Residues 138 to 173 (AARSTTQPSGVRPSALGANLSSSRSPRPASSAPSAP) are disordered. A compositionally biased stretch (low complexity) spans 158 to 172 (SSSRSPRPASSAPSA). Positions 182 to 365 (KLVAIGASTG…QVWQRLVSDV (184 aa)) constitute a CheB-type methylesterase domain. Active-site residues include S189, H216, and D310.

This sequence belongs to the CheB family. Post-translationally, phosphorylated by CheA. Phosphorylation of the N-terminal regulatory domain activates the methylesterase activity.

Its subcellular location is the cytoplasm. The enzyme catalyses [protein]-L-glutamate 5-O-methyl ester + H2O = L-glutamyl-[protein] + methanol + H(+). The catalysed reaction is L-glutaminyl-[protein] + H2O = L-glutamyl-[protein] + NH4(+). Its function is as follows. Involved in chemotaxis. Part of a chemotaxis signal transduction system that modulates chemotaxis in response to various stimuli. Catalyzes the demethylation of specific methylglutamate residues introduced into the chemoreceptors (methyl-accepting chemotaxis proteins or MCP) by CheR. Also mediates the irreversible deamidation of specific glutamine residues to glutamic acid. In Saccharophagus degradans (strain 2-40 / ATCC 43961 / DSM 17024), this protein is Protein-glutamate methylesterase/protein-glutamine glutaminase 1.